The sequence spans 847 residues: Ras GTPase-activating protein 2 (847 aa).

The segment covering 1–21 (MAAAAPAAAASPEAPAVSGSA) has biased composition (low complexity). The interval 1 to 31 (MAAAAPAAAASPEAPAVSGSADPETGDEDSR) is disordered. Ala-2 carries the post-translational modification N-acetylalanine. 2 consecutive C2 domains span residues 19-137 (GSAD…ETWF) and 148-288 (VQGK…QAWY). The Ras-GAP domain occupies 371–588 (NKLVPFITAV…TDVKKFLDEI (218 aa)). At Ser-554 the chain carries Phosphoserine. Positions 603–704 (VHLKEGEMYK…WIDVLCRVSR (102 aa)) constitute a PH domain. The Btk-type zinc-finger motif lies at 706 to 742 (NHNRLSSFHPSAYLNGNWLCCQETSESTPGCKPCTAG). Zn(2+) is bound by residues His-714, Cys-725, Cys-726, and Cys-736. The interval 819–847 (DEPHEKYRKKRSSSAKYGSKENPIVGKIS) is disordered.

The protein localises to the cell membrane. Functionally, inhibitory regulator of the Ras-cyclic AMP pathway. Binds inositol tetrakisphosphate (IP4) and phospholipids. In Mus musculus (Mouse), this protein is Ras GTPase-activating protein 2 (Rasa2).